Here is a 161-residue protein sequence, read N- to C-terminus: Epididymal protein 13 (161 aa).

The signal sequence occupies residues Met-1–Ala-23. N-linked (GlcNAc...) asparagine glycosylation is present at Asn-56.

The protein localises to the secreted. This is Epididymal protein 13 from Homo sapiens (Human).